Here is a 60-residue protein sequence, read N- to C-terminus: Potassium channel toxin alpha-KTx 29.3 (60 aa).

The N-terminal stretch at 1 to 28 (MKSVCGVLIILVVLTTMLSISTFSTVGA) is a signal peptide. Intrachain disulfides connect Cys-32-Cys-51, Cys-40-Cys-56, and Cys-44-Cys-58.

The protein belongs to the short scorpion toxin superfamily. Potassium channel inhibitor family. Alpha-KTx 29 subfamily. As to expression, expressed by the venom gland.

The protein localises to the secreted. Functionally, weakly inhibits the Kv1.3/KCNA3 channel (1 uM of thetoxin inhibits currents by 13.2%) and Kv7.1/KCNQ1 channel (10 uM of the toxin inhibits currents by 27.7%). The sequence is that of Potassium channel toxin alpha-KTx 29.3 from Lychas mucronatus (Chinese swimming scorpion).